A 213-amino-acid chain; its full sequence is Probable GTP-binding protein EngB (213 aa).

Positions 30–204 constitute an EngB-type G domain; it reads EGFEVAFAGR…YTVLAGWMEL (175 aa). GTP contacts are provided by residues 38-45, 64-68, 82-85, 149-152, and 182-185; these read GRSNAGKS, GRTQL, DLPG, TKAD, and LFSA. Mg(2+) is bound by residues S45 and T66.

Belongs to the TRAFAC class TrmE-Era-EngA-EngB-Septin-like GTPase superfamily. EngB GTPase family. Requires Mg(2+) as cofactor.

Its function is as follows. Necessary for normal cell division and for the maintenance of normal septation. The sequence is that of Probable GTP-binding protein EngB from Pseudomonas fluorescens (strain ATCC BAA-477 / NRRL B-23932 / Pf-5).